The chain runs to 90 residues: Putative sodium channel toxin Ts28 (90 aa).

Residues 1 to 23 (MKISLVTWLITALCLMEIEEIDG) form the signal peptide. Residues 26–86 (PGNYPVDFQG…FWDVMKKQCD (61 aa)) enclose the LCN-type CS-alpha/beta domain. 3 disulfides stabilise this stretch: Cys40/Cys60, Cys46/Cys65, and Cys50/Cys67.

It belongs to the long (3 C-C) scorpion toxin superfamily. In terms of assembly, monomer (edited version) and heterodimer (non-edited version) of this alpha chain and a beta chain (AC P0CI43). Expressed by the venom gland.

The protein localises to the secreted. Its function is as follows. The edited BmKBTx-like may modulate voltage-gated sodium channels (Nav). Functionally, the non-edited form is able to form a heterodimer. In orthologs, a heterodimer with LVP beta-chain induces lipolysis in rat adipocytes, which is mediated through the beta-2 adrenergic receptor pathway (ADRB2). Since no LVP beta-chains have been identified in the venom of this scorpion, it is possible that this protein is not involved in a lipolysis process. The sequence is that of Putative sodium channel toxin Ts28 from Tityus serrulatus (Brazilian scorpion).